The chain runs to 322 residues: Phosphatidylglycerol--prolipoprotein diacylglyceryl transferase (322 aa).

Helical transmembrane passes span 21-41, 50-70, 98-118, and 123-143; these read PLPI…AIWL, GGNP…GIIG, NGGL…WAYF, and IPLA…QAIG. A 1,2-diacyl-sn-glycero-3-phospho-(1'-sn-glycerol) is bound at residue R144. Transmembrane regions (helical) follow at residues 191-211 and 254-274; these read VHPT…LLIW and INTL…LRLG. Positions 283–322 are disordered; that stretch reads VDPAYHAAQAERDDTETAGLDATTGTVPGDSPETTGKKRK.

The protein belongs to the Lgt family.

Its subcellular location is the cell membrane. The catalysed reaction is L-cysteinyl-[prolipoprotein] + a 1,2-diacyl-sn-glycero-3-phospho-(1'-sn-glycerol) = an S-1,2-diacyl-sn-glyceryl-L-cysteinyl-[prolipoprotein] + sn-glycerol 1-phosphate + H(+). It functions in the pathway protein modification; lipoprotein biosynthesis (diacylglyceryl transfer). Its function is as follows. Catalyzes the transfer of the diacylglyceryl group from phosphatidylglycerol to the sulfhydryl group of the N-terminal cysteine of a prolipoprotein, the first step in the formation of mature lipoproteins. This chain is Phosphatidylglycerol--prolipoprotein diacylglyceryl transferase, found in Corynebacterium efficiens (strain DSM 44549 / YS-314 / AJ 12310 / JCM 11189 / NBRC 100395).